The primary structure comprises 794 residues: MLSIERKRTEKVDFSKPLTKYIKEQFSKAESDQHETQIATLNGLREDVRNLQERTETSKEMVWKYYSILSSLELRFPISENNVRISFPWTDSYRQRKSTLYSIYFERASVLFNYGSIVSQIASSTNRSNIEGVKKACNQFQLAAGVFNKLREYASLHPECSTSADFSSESLQALVTIMLAQAQECIYEKASMDNLSDSILSKLAAQVAEYYDTFNQLLNSNSLKSIVDRNWNITATVKSYLYKAISLYCHAKGLEQVSQFGEQVSRLMIAVDNINQSKVNLAKTAPIELKEIVERYVISITRYCESAKKDNDTIYHDTIPPAHKLTPIEKKPLAKALPLPEINFVDPFNSLVPFSVKEDSAYYNDQKETLLRKELDNIEFHNQSAKASLLSMGLPGSIEALDVGVPVALKEKMNVVTNEQGVSNITRLLENIQQLSDEDSAICLSAGNLLKKEEDEDNLMRATYGAQWHRTPSYTLTANLTQDYAKYTSHLQHSTKSDSFIRKKFEDHKNSIQELENQTEIIALLPTNNLPSGKIAEIASLTVLMNDLDALMANRESIAEKLKNLCKKDDITLKLLSPQKDKSLIYAEEIQKYEPLQMSLNESFLKQQKLIEDIRKENEKFTNQKSKQGNQREEILQKYANAYKVYNELKANLDEGTQFYLNFQEILNKFLNRCKDFTTGRENEKIELKRQIEAGVNPHSPLTSPSPSLQSPVNNYPNQFSSPQYHTSPNQQQQQQQQYVPSSQPPPQYSYNPQPYQPPQQFGGPLPPPQSFSAPPPPQSFTAPPPYNSNNKHY.

The BRO1 domain occupies 1–385; it reads MLSIERKRTE…DNIEFHNQSA (385 aa). Coiled coils occupy residues 499 to 568 and 600 to 655; these read SFIR…LCKK and LNES…NLDE. A disordered region spans residues 695 to 794; it reads GVNPHSPLTS…PPYNSNNKHY (100 aa). Over residues 698 to 712 the composition is skewed to low complexity; sequence PHSPLTSPSPSLQSP. Residues 713 to 722 show a composition bias toward polar residues; sequence VNNYPNQFSS. Composition is skewed to low complexity over residues 723–742 and 749–764; these read PQYHTSPNQQQQQQQQYVPS and YSYNPQPYQPPQQFGG. Residues 765–787 are compositionally biased toward pro residues; that stretch reads PLPPPQSFSAPPPPQSFTAPPPY.

As to quaternary structure, self-associates; the interaction is calcium-independent Interacts with pefa; the interaction is calcium-dependent. Interacts with pefb; the interaction is calcium-dependent.

Its subcellular location is the cytoplasm. It localises to the cytoplasmic vesicle membrane. It is found in the endosome. In terms of biological role, unknown. Required for development but not for cell death. This is ALG-2 interacting protein X (alxA) from Dictyostelium discoideum (Social amoeba).